The primary structure comprises 759 residues: Arylphorin subunit C223 (759 aa).

The signal sequence occupies residues Met1–Ala15.

It belongs to the hemocyanin family. In terms of assembly, heterohexamer. In terms of tissue distribution, fat body.

The protein localises to the secreted. It localises to the extracellular space. In terms of biological role, arylphorin is a larval storage protein (LSP) which may serve as a storage protein used primarily as a source of aromatic amino acids for protein synthesis during metamorphosis. It is a constituent of the sclerotizing system of the cuticle, and serves as a carrier for ecdysteroid hormone. In Calliphora vicina (Blue blowfly), this protein is Arylphorin subunit C223.